The chain runs to 302 residues: Putative thiol protease R355 (302 aa).

Residues His182 and Asp199 contribute to the active site. The active-site Nucleophile is the Cys244.

Belongs to the peptidase C48 family.

The protein localises to the virion. The protein is Putative thiol protease R355 of Acanthamoeba polyphaga mimivirus (APMV).